The chain runs to 279 residues: Shikimate dehydrogenase (NADP(+)) (279 aa).

Shikimate contacts are provided by residues 19–21 and Thr66; that span reads SRS. Lys70 serves as the catalytic Proton acceptor. Residues Asn91 and Asp106 each contribute to the shikimate site. NADP(+) contacts are provided by residues 129–133 and Phe222; that span reads GAGGA. Tyr224 contacts shikimate. Position 243 (Gly243) interacts with NADP(+).

This sequence belongs to the shikimate dehydrogenase family. As to quaternary structure, homodimer.

The enzyme catalyses shikimate + NADP(+) = 3-dehydroshikimate + NADPH + H(+). The protein operates within metabolic intermediate biosynthesis; chorismate biosynthesis; chorismate from D-erythrose 4-phosphate and phosphoenolpyruvate: step 4/7. Its function is as follows. Involved in the biosynthesis of the chorismate, which leads to the biosynthesis of aromatic amino acids. Catalyzes the reversible NADPH linked reduction of 3-dehydroshikimate (DHSA) to yield shikimate (SA). The sequence is that of Shikimate dehydrogenase (NADP(+)) from Anaeromyxobacter sp. (strain Fw109-5).